Reading from the N-terminus, the 31-residue chain is Cyclotide vinc-B (31 aa).

The segment at residues 1-31 (GSIPACGESCFKGKCYTPGCTCSKYPLCAKN) is a cross-link (cyclopeptide (Gly-Asn)). Intrachain disulfides connect Cys-6/Cys-20, Cys-10/Cys-22, and Cys-15/Cys-28.

Belongs to the cyclotide family. Post-translationally, this is a cyclic peptide.

Functionally, probably participates in a plant defense mechanism. This is Cyclotide vinc-B from Viola inconspicua.